The following is a 264-amino-acid chain: Putative hydro-lyase Psyr_0498 (264 aa).

The protein belongs to the D-glutamate cyclase family.

In Pseudomonas syringae pv. syringae (strain B728a), this protein is Putative hydro-lyase Psyr_0498.